A 491-amino-acid chain; its full sequence is Probable cytosol aminopeptidase (491 aa).

Mn(2+)-binding residues include Lys264 and Asp269. Lys276 is a catalytic residue. Mn(2+) is bound by residues Asp287, Asp346, and Glu348. The active site involves Arg350.

The protein belongs to the peptidase M17 family. It depends on Mn(2+) as a cofactor.

It localises to the cytoplasm. The enzyme catalyses Release of an N-terminal amino acid, Xaa-|-Yaa-, in which Xaa is preferably Leu, but may be other amino acids including Pro although not Arg or Lys, and Yaa may be Pro. Amino acid amides and methyl esters are also readily hydrolyzed, but rates on arylamides are exceedingly low.. The catalysed reaction is Release of an N-terminal amino acid, preferentially leucine, but not glutamic or aspartic acids.. In terms of biological role, presumably involved in the processing and regular turnover of intracellular proteins. Catalyzes the removal of unsubstituted N-terminal amino acids from various peptides. In Xylella fastidiosa (strain 9a5c), this protein is Probable cytosol aminopeptidase.